Consider the following 77-residue polypeptide: Conotoxin ArMSGL-0141 (77 aa).

The first 18 residues, 1 to 18 (MSGLGILVLTLLLLVYMA), serve as a signal peptide directing secretion. Residues 19-44 (TSHQDAGEKQATQRDAINVRRRRSLT) constitute a propeptide that is removed on maturation. Disulfide bonds link Cys-51/Cys-63, Cys-55/Cys-71, and Cys-62/Cys-75. Phe-76 carries the phenylalanine amide modification.

The protein belongs to the conotoxin O3 superfamily. Expressed by the venom duct.

It localises to the secreted. The protein is Conotoxin ArMSGL-0141 of Conus arenatus (Sand-dusted cone).